The sequence spans 228 residues: uncharacterized protein (228 aa).

It belongs to the HAD-like hydrolase superfamily.

Its subcellular location is the cytoplasm. It localises to the nucleus. This is an uncharacterized protein from Schizosaccharomyces pombe (strain 972 / ATCC 24843) (Fission yeast).